A 160-amino-acid polypeptide reads, in one-letter code: Cytochrome b6-f complex subunit 4 (160 aa).

3 helical membrane-spanning segments follow: residues 36–56 (LLYI…GLAV), 95–115 (LLGI…PFIE), and 131–151 (SLFL…CLPI).

It belongs to the cytochrome b family. PetD subfamily. The 4 large subunits of the cytochrome b6-f complex are cytochrome b6, subunit IV (17 kDa polypeptide, PetD), cytochrome f and the Rieske protein, while the 4 small subunits are PetG, PetL, PetM and PetN. The complex functions as a dimer.

Its subcellular location is the cellular thylakoid membrane. Component of the cytochrome b6-f complex, which mediates electron transfer between photosystem II (PSII) and photosystem I (PSI), cyclic electron flow around PSI, and state transitions. This is Cytochrome b6-f complex subunit 4 from Prochlorococcus marinus (strain NATL2A).